Here is a 212-residue protein sequence, read N- to C-terminus: Pyrrolidone-carboxylate peptidase (212 aa).

Active-site residues include glutamate 80, cysteine 143, and histidine 165.

The protein belongs to the peptidase C15 family. Homotetramer.

The protein localises to the cytoplasm. The enzyme catalyses Release of an N-terminal pyroglutamyl group from a polypeptide, the second amino acid generally not being Pro.. Removes 5-oxoproline from various penultimate amino acid residues except L-proline. The protein is Pyrrolidone-carboxylate peptidase of Vibrio vulnificus (strain YJ016).